We begin with the raw amino-acid sequence, 127 residues long: Fluoride-specific ion channel FluC (127 aa).

A run of 4 helical transmembrane segments spans residues 4-24 (PILA…GLGL), 36-56 (GTLV…AFFA), 68-88 (LVIT…AEIV), and 98-118 (WAMS…LAGI). Na(+) contacts are provided by glycine 75 and serine 78.

This sequence belongs to the fluoride channel Fluc/FEX (TC 1.A.43) family.

The protein localises to the cell inner membrane. The catalysed reaction is fluoride(in) = fluoride(out). Na(+) is not transported, but it plays an essential structural role and its presence is essential for fluoride channel function. In terms of biological role, fluoride-specific ion channel. Important for reducing fluoride concentration in the cell, thus reducing its toxicity. This is Fluoride-specific ion channel FluC from Nitrosomonas europaea (strain ATCC 19718 / CIP 103999 / KCTC 2705 / NBRC 14298).